A 2171-amino-acid polypeptide reads, in one-letter code: ATP-binding cassette sub-family C member Sur (2171 aa).

Over 1 to 36 (MKQLFNIIHCDHLNGHVRSIYDNLNTDICGIDRVRR) the chain is Extracellular. Residues 37–57 (VFTFFSIFLLLFGLMFVCSRY) traverse the membrane as a helical segment. Topologically, residues 58 to 71 (KKCHKTLLTFHNGR) are cytoplasmic. The chain crosses the membrane as a helical span at residues 72 to 92 (AAISLLLLALNSFDLARIFLP). Residues 93–112 (HQNVRNLNRLFQSSPRDLNY) lie on the Extracellular side of the membrane. A helical membrane pass occupies residues 113–133 (LVVIGSGELWNALFSTLLTLM). The Cytoplasmic portion of the chain corresponds to 134-145 (LMLYHRMVERKK). Residues 146–166 (ATVFLYASTAVEALTFALLSN) traverse the membrane as a helical segment. Residues 167–182 (ELFELVRYEDFLELQT) are Extracellular-facing. Residues 183–203 (CLVAMSAMCMVSLAMLDGLTV) form a helical membrane-spanning segment. Over 204–224 (YKECYHDDYLDDYGKIGYKHS) the chain is Cytoplasmic. Residues 225-245 (MATFYSKSCFWWLTPLLWLGY) form a helical membrane-spanning segment. The Extracellular portion of the chain corresponds to 246-299 (KEPLELEDLGQMKLEDSARSHYDHFLYIYTEKKKKSNSSPSLWYCYIKNSWQMF). A helical transmembrane segment spans residues 300–320 (ALGGILKLAGDLFALIGPLAI). Residues 321–447 (QKIVEYIEQL…MTEDTRNIME (127 aa)) lie on the Cytoplasmic side of the membrane. The ABC transmembrane type-1 1 domain maps to 344 to 622 (NEVANVLLST…FPITVPIIIA (279 aa)). The disordered stretch occupies residues 388-434 (DSSDSAGQVQSTSSTSDEKQKNDDSMATPEHVDNPSEPNISHDIGSI). The span at 389 to 402 (SSDSAGQVQSTSST) shows a compositional bias: polar residues. The span at 403–421 (SDEKQKNDDSMATPEHVDN) shows a compositional bias: basic and acidic residues. The helical transmembrane segment at 448 to 468 (FFLIIHYAWAIPFKIAVVIYL) threads the bilayer. Residues 469–474 (LYMNLG) are Extracellular-facing. Residues 475-495 (ISAVIGSIACIVIMTPLQFFI) traverse the membrane as a helical segment. At 496–562 (GNAMSKNAEV…KDATFWTLMA (67 aa)) the chain is on the cytoplasmic side. A helical membrane pass occupies residues 563–583 (VLTHIATVLITFVTLGVYVWL). Residues 584–600 (HRDQEFDLNASRLFSSL) lie on the Extracellular side of the membrane. The helical transmembrane segment at 601 to 621 (ALFQQLTVPLLIFPITVPIII) threads the bilayer. The Cytoplasmic portion of the chain corresponds to 622-1409 (AARVSTRRLE…KYGKISDDIY (788 aa)). In terms of domain architecture, ABC transporter 1 spans 785–1014 (VSINDGLFTW…QPRITAEWNA (230 aa)). 822-829 (GKNGSGKT) is an ATP binding site. A compositionally biased stretch (basic residues) spans 1141–1151 (RRRHTLGRRGS). Disordered stretches follow at residues 1141–1177 (RRRH…SISG) and 1209–1265 (PRVQ…DHVR). Low complexity predominate over residues 1160–1176 (LSGLSTLTATSESSSIS). Over residues 1212-1232 (QSWQPPQHVTHHQPLSRNASS) the composition is skewed to polar residues. Residues 1242–1251 (DVKKSEEARR) show a composition bias toward basic and acidic residues. The helical transmembrane segment at 1410-1430 (LMYIRAAGLPIITIFFITALI) threads the bilayer. An ABC transmembrane type-1 2 domain is found at 1421–1715 (ITIFFITALI…AVTKSPSELR (295 aa)). Topologically, residues 1431-1468 (WQCLRVYTDIWLQQWSNVHGRVASKGHVVLHPSEQDHE) are extracellular. The chain crosses the membrane as a helical span at residues 1469–1489 (VTYYFRMYAAISCVCIIMALV). The Cytoplasmic portion of the chain corresponds to 1490 to 1558 (STPAGQYAGC…QRLLQFTLLC (69 aa)). A helical membrane pass occupies residues 1559–1579 (LSAILINVTITPWILVLTLPI). The Extracellular segment spans residues 1580-1655 (CGAYYLIQKF…YALLNTSHRW (76 aa)). The chain crosses the membrane as a helical span at residues 1656 to 1676 (LGVSLDYLGGCIVFVATVTAL). Over 1677–1718 (TAASVSCRRHYEATTSPSASASPSPFETYAVTKSPSELRPSP) the chain is Cytoplasmic. The chain crosses the membrane as a helical span at residues 1719 to 1739 (SLVGLAINYTLLVPIYLNWVV). Topologically, residues 1740–2171 (KLLADMEMYA…GLLEKGASKW (432 aa)) are extracellular. Residues 1766–1778 (ADADADADADVDA) show a composition bias toward acidic residues. 2 disordered regions span residues 1766–1844 (ADAD…GHEN) and 1866–1902 (NFHH…DKDK). Basic and acidic residues-rich tracts occupy residues 1793 to 1804 (EVDRSSQSDAGD) and 1887 to 1902 (VIKD…DKDK). The region spanning 1930-2165 (IHFDNVSLRY…EGSVFRGLLE (236 aa)) is the ABC transporter 2 domain. 1964–1971 (GRTGSGKS) provides a ligand contact to ATP.

It belongs to the ABC transporter superfamily. ABCC family. Conjugate transporter (TC 3.A.1.208) subfamily. In terms of tissue distribution, highly expressed in adult heart. Detected at lower levels in head and abdomen.

It localises to the membrane. May function as regulatory subunit of ATP-sensitive potassium channels (KATP) and form KATP channels with a member of the ATP-sensitive inward rectifier potassium channel family. May also have channel activity by itself (in vitro). May protect the heart during hypoxia. May protect against heart failure under conditions of tachycardic stress. The protein is ATP-binding cassette sub-family C member Sur (Sur) of Drosophila melanogaster (Fruit fly).